Reading from the N-terminus, the 85-residue chain is MASFKIVIVCLALLVAVASARRRDMMSDDELDYHFSKRGIPCACDSDGPDIRSASLSGIVWMGSCPSGWKKCKSYYSIVADCCNQ.

The first 20 residues, 1–20 (MASFKIVIVCLALLVAVASA), serve as a signal peptide directing secretion. Residues 21–36 (RRRDMMSDDELDYHFS) constitute a propeptide that is removed on maturation. Cystine bridges form between Cys42–Cys82, Cys44–Cys72, and Cys65–Cys83.

This sequence belongs to the sea anemone sodium channel inhibitory toxin family. Type II subfamily. As to expression, expressed in ectodermal glands and in clumps outside of the extodermal layer. Is not expressed in nematocytes. In adult female tissues, shows similar expression levels in mesenteries (gametes-producing tissue), tentacles, pharynx and physa.

Its subcellular location is the secreted. Functionally, binds to site 3 of voltage-gated sodium channels and inhibits the inactivation process. Is highly active on DmNav1/TipE (drosophila) and is only extremely weakly active on rat Nav1.4-beta-1/SCN4A-SCN1B, and on human Nav1.5-beta-1/SCN5A-beta-1. This reveals high specificity for arthropod over mammalian channels. In vivo, when released into the medium, this recombinant toxin induces impaired swimming, paralysis and death of the crustacean A.nauplii within several hours. Also causes paralysis of cherry shrimps immediately after injection at very low doses. Its effect on zebrafish (D.rerio) larvae is also rapid, since it induces tail twitching accompanied by impaired swimming after 20 minutes and complete paralysis within 45 minutes. It has also been observed to cause death of zebrafish larvae within 1 hour. The polypeptide is Putative N.vectensis toxin 1 9 (Nematostella vectensis (Starlet sea anemone)).